Reading from the N-terminus, the 548-residue chain is MKLSKKYTFRSRKVLLIILDGVGYSPKGPESGNAIAGAKLPFLNRVWNQFPTLHIQAHGKAVGMPSDDDMGNSEVGHNVLGSGRIFDQGAKLVSNSIASGDIFNGQAWKEVIGNSKKNNSTLHLLGLFSDGNVHSHIDHTKALISQAILEKVPKIRLHILLDGRDVPEKSALDYLNPFETWLDSLRKSGTDIRIASGGGRMTITMDRYEADWSMVERGWKVHVKGEGRYFSSAKEAIETFRSENPKIIDQYLPSFVISDNGKPVGKIQDGDSVVFTNFRGDRAIEISLAFTEKNFDKFDRGPLPNVLYAGIMQYDGDLKLPERFLVAPPAIDRTLGEYMASSNIPQYALSETQKYGHVTYFWNGNKSGYFDQNSEEYREILSDVIPFDQSPEMKALLITEALEKALNENKQDFYRVNYANGDMVGHTGNYLATVQAMEFLDGCVERLWKTCEKQNIVLLVTADHGNADEMFQLDKKGNVEKDSHGNPIPKTSHTLNPVPISILDPENKIRFNSKLSNPGLANVAATILDVMGYETPEGYHPSLIQNES.

2 residues coordinate Mn(2+): Asp-20 and Ser-73. The Phosphoserine intermediate role is filled by Ser-73. Substrate is bound by residues His-134, 164–165 (RD), Arg-200, Arg-207, 279–282 (RGDR), and Lys-354. 5 residues coordinate Mn(2+): Asp-422, His-426, Asp-463, His-464, and His-493.

It belongs to the BPG-independent phosphoglycerate mutase family. Monomer. It depends on Mn(2+) as a cofactor.

It carries out the reaction (2R)-2-phosphoglycerate = (2R)-3-phosphoglycerate. It participates in carbohydrate degradation; glycolysis; pyruvate from D-glyceraldehyde 3-phosphate: step 3/5. Its function is as follows. Catalyzes the interconversion of 2-phosphoglycerate and 3-phosphoglycerate. The polypeptide is Probable 2,3-bisphosphoglycerate-independent phosphoglycerate mutase (gpmI) (Leptospira interrogans serogroup Icterohaemorrhagiae serovar Lai (strain 56601)).